Reading from the N-terminus, the 350-residue chain is Histidinol-phosphate aminotransferase (350 aa).

An N6-(pyridoxal phosphate)lysine modification is found at lysine 212.

It belongs to the class-II pyridoxal-phosphate-dependent aminotransferase family. Histidinol-phosphate aminotransferase subfamily. In terms of assembly, homodimer. It depends on pyridoxal 5'-phosphate as a cofactor.

It carries out the reaction L-histidinol phosphate + 2-oxoglutarate = 3-(imidazol-4-yl)-2-oxopropyl phosphate + L-glutamate. It functions in the pathway amino-acid biosynthesis; L-histidine biosynthesis; L-histidine from 5-phospho-alpha-D-ribose 1-diphosphate: step 7/9. The chain is Histidinol-phosphate aminotransferase from Geobacter sulfurreducens (strain ATCC 51573 / DSM 12127 / PCA).